Here is a 61-residue protein sequence, read N- to C-terminus: uncharacterized protein (61 aa).

Helical transmembrane passes span 7–24 and 29–48; these read FNVF…YKLF and VSTT…IVGL.

It localises to the cell membrane. This is an uncharacterized protein from Bacillus subtilis (strain 168).